The following is a 1044-amino-acid chain: Translation initiation factor IF-2 (1044 aa).

The disordered stretch occupies residues 31–425; that stretch reads VRSASSTVEP…RKSKRAKRQE (395 aa). Pro residues-rich tracts occupy residues 77-98 and 106-116; these read GPAPAARPQAPAPAQPAPPQPA and APAPAPAPRPA. Low complexity predominate over residues 117–148; sequence EPAANPAPAAPPAFQAPAPAPAERPAAAQRPA. Positions 168 to 185 are enriched in gly residues; that stretch reads GGPGQGPRPGARPGGPGA. Residues 204-247 are compositionally biased toward basic and acidic residues; it reads GPGDRPERSERPDRGDRPQGDRPRSDRPQGERQQGDRPQGDRPG. A compositionally biased stretch (low complexity) spans 285–304; sequence GGAPRPGNNPFASNQGMPRP. The segment covering 305-328 has biased composition (pro residues); sequence QGGPRPTPAGPGGPRPGGPRPNPG. Over residues 329 to 338 the composition is skewed to low complexity; the sequence is MMPARPTVGR. The segment covering 339–409 has biased composition (gly residues); the sequence is PGAGPGAGRP…GTQGAFGRAG (71 aa). Residues 413–422 are compositionally biased toward basic residues; the sequence is VRGRKSKRAK. Residues 537–709 enclose the tr-type G domain; that stretch reads ARPPVVTVMG…VLLTADASLD (173 aa). The segment at 546–553 is G1; it reads GHVDHGKT. 546-553 is a GTP binding site; that stretch reads GHVDHGKT. The tract at residues 571–575 is G2; the sequence is GITQH. The G3 stretch occupies residues 596 to 599; it reads DTPG. GTP is bound by residues 596–600 and 650–653; these read DTPGH and NKVD. The tract at residues 650 to 653 is G4; sequence NKVD. Residues 686-688 form a G5 region; sequence SAR.

This sequence belongs to the TRAFAC class translation factor GTPase superfamily. Classic translation factor GTPase family. IF-2 subfamily.

The protein resides in the cytoplasm. Functionally, one of the essential components for the initiation of protein synthesis. Protects formylmethionyl-tRNA from spontaneous hydrolysis and promotes its binding to the 30S ribosomal subunits. Also involved in the hydrolysis of GTP during the formation of the 70S ribosomal complex. In Kineococcus radiotolerans (strain ATCC BAA-149 / DSM 14245 / SRS30216), this protein is Translation initiation factor IF-2.